Here is a 410-residue protein sequence, read N- to C-terminus: MYFLGLLSLLVLPSKAFKTNFPDETIAELSVNVYNQLRAAREDENILFCPLSIAIAMGMIELGAHGTTLKEIRHSLGFDSLKNGEEFTFLKDLSDMATTEESHYVLNMANSLYVQNGFHVSEKFLQLVKKYFKAEVENIDFSQSAAVATHINKWVENHTNNMIKDFVSSRDFSALTHLVLINAIYFKGNWKSQFRPENTRTFSFTKDDETEVQIPMMYQQGEFYYGEFSDGSNEAGGIYQVLEIPYEGDEISMMIVLSRQEVPLVTLEPLVKASLINEWANSVKKQKVEVYLPRFTVEQEIDLKDVLKGLGITEVFSRSADLTAMSDNKELYLAKAFHKAFLEVNEEGSEAAAASGMIAISRMAVLYPQVIVDHPFFFLVRNRRTGTVLFMGRVMHPEAMNTSGHDFEEL.

Positions 1-16 (MYFLGLLSLLVLPSKA) are cleaved as a signal peptide. N157 and N401 each carry an N-linked (GlcNAc...) asparagine glycan.

Belongs to the serpin family. Detected in embryonic ocular vitreous fluid (at protein level). In the embryo present in retina, brain, cerebellum and spinal cord. In adult, predominantly expressed in the brain.

Its subcellular location is the secreted. It is found in the cytoplasmic vesicle. The protein localises to the secretory vesicle lumen. It localises to the perikaryon. In terms of biological role, serine protease inhibitor that inhibits plasminogen activators and plasmin but not thrombin. May be involved in the formation or reorganization of synaptic connections as well as for synaptic plasticity in the adult nervous system. May protect neurons from cell damage by tissue-type plasminogen activator. This is Neuroserpin (SERPINI1) from Gallus gallus (Chicken).